Consider the following 312-residue polypeptide: Acetyl-coenzyme A carboxylase carboxyl transferase subunit alpha (312 aa).

Residues 36 to 286 (RLDKEVKSIY…KEYFLDALRT (251 aa)) form the CoA carboxyltransferase C-terminal domain.

The protein belongs to the AccA family. In terms of assembly, acetyl-CoA carboxylase is a heterohexamer composed of biotin carboxyl carrier protein (AccB), biotin carboxylase (AccC) and two subunits each of ACCase subunit alpha (AccA) and ACCase subunit beta (AccD).

It localises to the cytoplasm. The enzyme catalyses N(6)-carboxybiotinyl-L-lysyl-[protein] + acetyl-CoA = N(6)-biotinyl-L-lysyl-[protein] + malonyl-CoA. Its pathway is lipid metabolism; malonyl-CoA biosynthesis; malonyl-CoA from acetyl-CoA: step 1/1. In terms of biological role, component of the acetyl coenzyme A carboxylase (ACC) complex. First, biotin carboxylase catalyzes the carboxylation of biotin on its carrier protein (BCCP) and then the CO(2) group is transferred by the carboxyltransferase to acetyl-CoA to form malonyl-CoA. In Helicobacter pylori (strain J99 / ATCC 700824) (Campylobacter pylori J99), this protein is Acetyl-coenzyme A carboxylase carboxyl transferase subunit alpha.